The following is a 343-amino-acid chain: Ubiquitin thioesterase OTU1 (343 aa).

The tract at residues 45 to 123 is UBX-like; sequence RCKAKGGTHV…IVEEDQTRPK (79 aa). The OTU domain occupies 144–269; it reads LTRTAVPADN…GIHYDPLQRN (126 aa). Residues 149-155 form a cys-loop region; that stretch reads VPADNSC. Residue aspartate 152 is part of the active site. Cysteine 155 (nucleophile) is an active-site residue. Positions 208 to 218 are variable-loop; sequence IRRDDTWGGAI. Positions 258–262 are his-loop; it reads YDGIH. Isoleucine 261 lines the substrate pocket. The active site involves histidine 262. Positions 286 to 291 are S2 site; that stretch reads DIVLVQ. The C2H2-type zinc finger occupies 313 to 337; sequence LRCMLCQKGLTGQAEARDHARETGH. Residue histidine 337 is part of the active site.

In terms of assembly, interacts with VCP; the interaction is direct. Interacts with FAF2/UBXD8. Interacts with DERL1; however interaction is dependent on the UBAX-like region, suggesting that it may be indirect. Interacts with PLAA, UBXN6 and VCP; may form a complex involved in macroautophagy.

The protein resides in the cytoplasm. The catalysed reaction is Thiol-dependent hydrolysis of ester, thioester, amide, peptide and isopeptide bonds formed by the C-terminal Gly of ubiquitin (a 76-residue protein attached to proteins as an intracellular targeting signal).. In terms of biological role, hydrolase that can remove conjugated ubiquitin from proteins and participates in endoplasmic reticulum-associated degradation (ERAD) for misfolded lumenal proteins. May act by triming the ubiquitin chain on the associated substrate to facilitate their threading through the VCP/p97 pore. Ubiquitin moieties on substrates may present a steric impediment to the threading process when the substrate is transferred to the VCP pore and threaded through VCP's axial channel. Mediates deubiquitination of 'Lys-27'-, 'Lys-29'- and 'Lys-33'-linked polyubiquitin chains. Also able to hydrolyze 'Lys-11'-linked ubiquitin chains. Cleaves both polyubiquitin and di-ubiquitin. May play a role in macroautophagy, regulating for instance the clearance of damaged lysosomes. May recruit PLAA, UBXN6 and VCP to damaged lysosome membranes decorated with K48-linked ubiquitin chains and remove these chains allowing autophagosome formation. The chain is Ubiquitin thioesterase OTU1 (Yod1) from Rattus norvegicus (Rat).